A 440-amino-acid chain; its full sequence is Glycerophosphocholine cholinephosphodiesterase ENPP6 (440 aa).

The first 22 residues, 1-22 (MAGKLWTFLLLFGFSWVWPASA), serve as a signal peptide directing secretion. The substrate site is built by Asp32, Ser71, and Asn92. Zn(2+) contacts are provided by Asp32 and Ser71. The Nucleophile role is filled by Ser71. Position 71 is a phosphoserine (Ser71). N-linked (GlcNAc...) asparagine glycans are attached at residues Asn100 and Asn118. A disulfide bond links Cys142 and Cys154. Asp193 lines the substrate pocket. Zn(2+) is bound by residues Asp193, His197, Asp240, and His241. Position 241 (His241) interacts with substrate. Asn341 carries N-linked (GlcNAc...) asparagine glycosylation. His354 lines the substrate pocket. Zn(2+) is bound at residue His354. An N-linked (GlcNAc...) asparagine glycan is attached at Asn404. Residue Ser419 is the site of GPI-anchor amidated serine attachment. Residues 420-440 (SSPSIPPNSCALVLILLLYFV) constitute a propeptide, removed in mature form.

The protein belongs to the nucleotide pyrophosphatase/phosphodiesterase family. As to quaternary structure, homodimer; disulfide-linked. Homotetramer. Zn(2+) serves as cofactor.

Its subcellular location is the cell membrane. It carries out the reaction sn-glycerol 3-phosphocholine + H2O = phosphocholine + glycerol + H(+). The enzyme catalyses a 1-acyl-sn-glycero-3-phosphocholine + H2O = a 1-acyl-sn-glycerol + phosphocholine + H(+). The catalysed reaction is a 1-O-alkyl-sn-glycero-3-phosphocholine + H2O = a 1-O-alkyl-sn-glycerol + phosphocholine + H(+). It catalyses the reaction 1-dodecanoyl-sn-glycero-3-phosphocholine + H2O = 1-dodecanoyl-sn-glycerol + phosphocholine + H(+). It carries out the reaction 1-hexadecanoyl-sn-glycero-3-phosphocholine + H2O = 1-hexadecanoyl-sn-glycerol + phosphocholine + H(+). The enzyme catalyses 1-(5Z,8Z,11Z,14Z-eicosatetraenoyl)-sn-glycero-3-phosphocholine + H2O = 1-(5Z,8Z,11Z,14Z-eicosatetraenoyl)-sn-glycerol + phosphocholine + H(+). The catalysed reaction is 1-tetradecanoyl-sn-glycero-3-phosphocholine + H2O = 1-tetradecanoyl-sn-glycerol + phosphocholine + H(+). It catalyses the reaction sphing-4-enine-phosphocholine + H2O = sphing-4-enine + phosphocholine + H(+). It carries out the reaction 1-(9Z-octadecenoyl)-sn-glycero-3-phosphocholine + H2O = 1-(9Z-octadecenoyl)-sn-glycerol + phosphocholine + H(+). The enzyme catalyses 1-(9Z,12Z)-octadecadienoyl-sn-glycero-3-phosphocholine + H2O = 1-(9Z,12Z-octadecadienoyl)-sn-glycerol + phosphocholine + H(+). The catalysed reaction is glycero-2-phosphocholine + H2O = phosphocholine + glycerol + H(+). Its activity is regulated as follows. Inhibited by EDTA and EGTA in vitro. Functionally, choline-specific glycerophosphodiesterase that hydrolyzes glycerophosphocholine (GPC) and lysophosphatidylcholine (LPC) and contributes to supplying choline to the cells. Has a preference for LPC with short (12:0 and 14:0) or polyunsaturated (18:2 and 20:4) fatty acids. In vitro, hydrolyzes only choline-containing lysophospholipids, such as sphingosylphosphorylcholine (SPC), platelet-activating factor (PAF) and lysoPAF, but not other lysophospholipids. The chain is Glycerophosphocholine cholinephosphodiesterase ENPP6 from Rattus norvegicus (Rat).